The primary structure comprises 383 residues: Phosphoenolpyruvate/phosphate translocator 2, chloroplastic (383 aa).

Residues 1–55 (MFALTFLNPNPRLPSPLFLAKSTPESALSRRSRAFSSSNSYPWRPNLRFNGFKLK) constitute a chloroplast transit peptide. A run of 8 helical transmembrane segments spans residues 76-96 (GLKL…YNIF), 108-128 (ATVT…MWLL), 143-163 (VIVQ…VSLG), 179-199 (FFTV…WIVC), 210-232 (LASF…SNVT), 253-273 (INLF…LAIL), 299-319 (IMSL…YMIL), and 350-369 (VSPL…YLYS). The EamA domain maps to 93-212 (YNIFNKQVLR…PIVAGVSLAS (120 aa)).

Belongs to the TPT transporter family. PPT (TC 2.A.7.9) subfamily. As to expression, widely expressed in leaves throughout development. In flowers, expressed in sepals and pistils.

It is found in the plastid. The protein resides in the chloroplast membrane. Phosphoenolpyruvate/phosphate translocator that transports phosphoenolpyruvate (PEP), 2-phosphoglycerate and 3-phosphoglycerate. In Arabidopsis thaliana (Mouse-ear cress), this protein is Phosphoenolpyruvate/phosphate translocator 2, chloroplastic (PPT2).